A 313-amino-acid chain; its full sequence is Aspartate carbamoyltransferase catalytic subunit (313 aa).

2 residues coordinate carbamoyl phosphate: Arg61 and Thr62. Lys89 lines the L-aspartate pocket. Carbamoyl phosphate-binding residues include Arg111, His139, and Gln142. The L-aspartate site is built by Arg172 and Arg227. Carbamoyl phosphate-binding residues include Gly268 and Pro269.

The protein belongs to the aspartate/ornithine carbamoyltransferase superfamily. ATCase family. Heterododecamer (2C3:3R2) of six catalytic PyrB chains organized as two trimers (C3), and six regulatory PyrI chains organized as three dimers (R2).

It carries out the reaction carbamoyl phosphate + L-aspartate = N-carbamoyl-L-aspartate + phosphate + H(+). Its pathway is pyrimidine metabolism; UMP biosynthesis via de novo pathway; (S)-dihydroorotate from bicarbonate: step 2/3. Functionally, catalyzes the condensation of carbamoyl phosphate and aspartate to form carbamoyl aspartate and inorganic phosphate, the committed step in the de novo pyrimidine nucleotide biosynthesis pathway. The chain is Aspartate carbamoyltransferase catalytic subunit from Gluconobacter oxydans (strain 621H) (Gluconobacter suboxydans).